The sequence spans 209 residues: Probable L-serine dehydratase, alpha chain (209 aa).

Belongs to the iron-sulfur dependent L-serine dehydratase family. Heterodimer of an alpha chain and a beta chain. [4Fe-4S] cluster is required as a cofactor.

It catalyses the reaction L-serine = pyruvate + NH4(+). It functions in the pathway carbohydrate biosynthesis; gluconeogenesis. The polypeptide is Probable L-serine dehydratase, alpha chain (sdhA) (Latilactobacillus sakei (Lactobacillus sakei)).